Reading from the N-terminus, the 336-residue chain is Tryptophan--tRNA ligase (336 aa).

ATP-binding positions include Thr-11–Thr-13 and Gly-19–Asn-20. The 'HIGH' region signature appears at Thr-12–Asn-20. Asp-145 is an L-tryptophan binding site. ATP is bound by residues Gly-157 to Asp-159, Leu-196, and Lys-203 to Ser-207. Positions Lys-203–Ser-207 match the 'KMSKS' region motif.

The protein belongs to the class-I aminoacyl-tRNA synthetase family. In terms of assembly, homodimer.

Its subcellular location is the cytoplasm. The catalysed reaction is tRNA(Trp) + L-tryptophan + ATP = L-tryptophyl-tRNA(Trp) + AMP + diphosphate + H(+). Its function is as follows. Catalyzes the attachment of tryptophan to tRNA(Trp). The sequence is that of Tryptophan--tRNA ligase from Neisseria meningitidis serogroup A / serotype 4A (strain DSM 15465 / Z2491).